The chain runs to 119 residues: Small ribosomal subunit protein uS13 (119 aa).

The tract at residues 90-119 (IRHRRGLPLRGQRTRSNARTRKGKRKPIRS) is disordered. Residues 91-119 (RHRRGLPLRGQRTRSNARTRKGKRKPIRS) are compositionally biased toward basic residues.

The protein belongs to the universal ribosomal protein uS13 family. Part of the 30S ribosomal subunit. Forms a loose heterodimer with protein S19. Forms two bridges to the 50S subunit in the 70S ribosome.

In terms of biological role, located at the top of the head of the 30S subunit, it contacts several helices of the 16S rRNA. In the 70S ribosome it contacts the 23S rRNA (bridge B1a) and protein L5 of the 50S subunit (bridge B1b), connecting the 2 subunits; these bridges are implicated in subunit movement. Contacts the tRNAs in the A and P-sites. This chain is Small ribosomal subunit protein uS13, found in Coxiella burnetii (strain CbuK_Q154) (Coxiella burnetii (strain Q154)).